The primary structure comprises 300 residues: GTPase Era (300 aa).

In terms of domain architecture, Era-type G spans 6 to 173; the sequence is KSGFVAIVGR…MDVLVEQMPE (168 aa). Positions 14-21 are G1; that stretch reads GRPNVGKS. GTP is bound at residue 14-21; it reads GRPNVGKS. The tract at residues 40–44 is G2; sequence QTTRN. The G3 stretch occupies residues 61–64; that stretch reads DTPG. Residues 61–65 and 123–126 each bind GTP; these read DTPGI and NKID. Residues 123–126 form a G4 region; it reads NKID. The segment at 152 to 154 is G5; the sequence is ISA. The KH type-2 domain maps to 204 to 281; that stretch reads TRDEIPHSVA…YLELWVKVQK (78 aa).

It belongs to the TRAFAC class TrmE-Era-EngA-EngB-Septin-like GTPase superfamily. Era GTPase family. In terms of assembly, monomer.

It localises to the cytoplasm. The protein resides in the cell membrane. An essential GTPase that binds both GDP and GTP, with rapid nucleotide exchange. Plays a role in 16S rRNA processing and 30S ribosomal subunit biogenesis and possibly also in cell cycle regulation and energy metabolism. The polypeptide is GTPase Era (Enterococcus faecalis (strain ATCC 700802 / V583)).